The following is a 323-amino-acid chain: Aldo-keto reductase family 1 member C1 (323 aa).

NADP(+) contacts are provided by residues 20–24 and aspartate 50; that span reads GFGTY. Tyrosine 24 is a binding site for substrate. Tyrosine 55 serves as the catalytic Proton donor. Histidine 117 provides a ligand contact to substrate. Residues 166–167, glutamine 190, and 216–222 each bind NADP(+); these read SN and YSALGSH. Substrate contacts are provided by histidine 222 and tryptophan 227. Residue 270–280 participates in NADP(+) binding; the sequence is KSYNEQRIRQN.

The protein belongs to the aldo/keto reductase family. Monomer.

Its subcellular location is the cytoplasm. It is found in the cytosol. The enzyme catalyses a 3alpha-hydroxysteroid + NADP(+) = a 3-oxosteroid + NADPH + H(+). It catalyses the reaction a 3alpha-hydroxysteroid + NAD(+) = a 3-oxosteroid + NADH + H(+). It carries out the reaction (17R,20S)-17,20-dihydroxypregn-4-en-3-one + NADP(+) = 17alpha-hydroxyprogesterone + NADPH + H(+). The catalysed reaction is (17R,20S)-17,20-dihydroxypregn-4-en-3-one + NAD(+) = 17alpha-hydroxyprogesterone + NADH + H(+). The enzyme catalyses (20S)-hydroxypregn-4-en-3-one + NADP(+) = progesterone + NADPH + H(+). It catalyses the reaction (20S)-hydroxypregn-4-en-3-one + NAD(+) = progesterone + NADH + H(+). It carries out the reaction (1R,2R)-1,2-dihydrobenzene-1,2-diol + NADP(+) = catechol + NADPH + H(+). The catalysed reaction is (S)-indan-1-ol + NAD(+) = indan-1-one + NADH + H(+). The enzyme catalyses (S)-indan-1-ol + NADP(+) = indan-1-one + NADPH + H(+). It catalyses the reaction 5alpha-androstane-3alpha,17beta-diol + NADP(+) = 17beta-hydroxy-5alpha-androstan-3-one + NADPH + H(+). It carries out the reaction 5alpha-androstane-3beta,17beta-diol + NADP(+) = 17beta-hydroxy-5alpha-androstan-3-one + NADPH + H(+). The catalysed reaction is 5alpha-androstane-3alpha,17beta-diol + NAD(+) = 17beta-hydroxy-5alpha-androstan-3-one + NADH + H(+). The enzyme catalyses 17beta-hydroxy-5alpha-androstan-3-one + NADP(+) = 5alpha-androstan-3,17-dione + NADPH + H(+). It catalyses the reaction androsterone + NADP(+) = 5alpha-androstan-3,17-dione + NADPH + H(+). It carries out the reaction androsterone + NADPH + H(+) = 5alpha-androstane-3alpha,17beta-diol + NADP(+). The catalysed reaction is 5alpha-androstane-3alpha,17beta-diol + NAD(+) = androsterone + NADH + H(+). The enzyme catalyses 17beta-estradiol + NADP(+) = estrone + NADPH + H(+). It catalyses the reaction 17beta-estradiol + NAD(+) = estrone + NADH + H(+). It carries out the reaction testosterone + NADP(+) = androst-4-ene-3,17-dione + NADPH + H(+). The catalysed reaction is 20alpha-hydroxy-5beta-pregnan-3-one + NADP(+) = 5beta-pregnan-3,20-dione + NADPH + H(+). The enzyme catalyses 3beta-hydroxy-5beta-pregnane-20-one + NADP(+) = 5beta-pregnan-3,20-dione + NADPH + H(+). It catalyses the reaction 3beta-hydroxy-5beta-pregnane-20-one + NADPH + H(+) = 3beta,20alpha-dihydroxy-5beta-pregnane + NADP(+). It carries out the reaction (3beta,5alpha,17beta)-3-hydroxyandrostan-17-yl sulfate + NADP(+) = 5alpha-dihydrotestosterone sulfate + NADPH + H(+). The protein operates within steroid metabolism. In terms of biological role, cytosolic aldo-keto reductase that catalyzes the NADH and NADPH-dependent reduction of ketosteroids to hydroxysteroids. Most probably acts as a reductase in vivo since the oxidase activity measured in vitro is inhibited by physiological concentrations of NADPH. Displays a broad positional specificity acting on positions 3, 17 and 20 of steroids and regulates the metabolism of hormones like estrogens and androgens. May also reduce conjugated steroids such as 5alpha-dihydrotestosterone sulfate. Displays affinity for bile acids. The polypeptide is Aldo-keto reductase family 1 member C1 (AKR1C1) (Pongo abelii (Sumatran orangutan)).